The chain runs to 352 residues: Septin-2B (352 aa).

Residues 33 to 305 (KGFEFTLMVV…ENFRSERLKK (273 aa)) form the Septin-type G domain. Residues 43-50 (GESGLGKS) are G1 motif. GTP is bound by residues 43-50 (GESGLGKS), Thr-77, Gly-103, 182-190 (KADTLTLRE), Gly-240, and Arg-255. A G3 motif region spans residues 100-103 (DTPG). Residues 181 to 184 (AKAD) form a G4 motif region. The important for dimerization stretch occupies residues 259-269 (WGVVEVENPEH).

It belongs to the TRAFAC class TrmE-Era-EngA-EngB-Septin-like GTPase superfamily. Septin GTPase family. Septins polymerize into heterooligomeric protein complexes that form filaments, and associate with cellular membranes, actin filaments and microtubules. GTPase activity is required for filament formation. Can form heterooligomers with other family members and form filaments. Interacts with wdpcp.

The protein localises to the cytoplasm. The protein resides in the cytoskeleton. It localises to the spindle. It is found in the cleavage furrow. Its subcellular location is the midbody. The protein localises to the cell projection. The protein resides in the cilium membrane. Functionally, filament-forming cytoskeletal GTPase. Required for normal organization of the actin cytoskeleton. Plays a role in the biogenesis of polarized columnar-shaped epithelium. Required for the progression through mitosis through regulation of chromosome congression. During anaphase, may be required for chromosome segregation and spindle elongation. Probably plays a role in ciliogenesis and collective cell movements including convergent extension during gastrulation. In cilia, required for the integrity of the diffusion barrier at the base of the primary cilium that prevents diffusion of transmembrane proteins between the cilia and plasma membranes. Controls cell shape and not polarization of cells during convergent extension. The protein is Septin-2B (sept2-b) of Xenopus laevis (African clawed frog).